We begin with the raw amino-acid sequence, 255 residues long: tRNA (guanine-N(7)-)-methyltransferase (255 aa).

The segment at 1 to 35 is disordered; that stretch reads MTRTNDASGGGKLPRKRFYRARAHSNPLSDSHFPV. Positions 13-23 are enriched in basic residues; the sequence is LPRKRFYRARA. S-adenosyl-L-methionine is bound by residues G75, 98 to 99, 131 to 132, and L151; these read EL and NS. D154 is an active-site residue. 229-231 is a binding site for S-adenosyl-L-methionine; the sequence is TEE.

It belongs to the class I-like SAM-binding methyltransferase superfamily. TrmB family.

It localises to the nucleus. It carries out the reaction guanosine(46) in tRNA + S-adenosyl-L-methionine = N(7)-methylguanosine(46) in tRNA + S-adenosyl-L-homocysteine. It participates in tRNA modification; N(7)-methylguanine-tRNA biosynthesis. Functionally, catalyzes the formation of N(7)-methylguanine at position 46 (m7G46) in tRNA. The protein is tRNA (guanine-N(7)-)-methyltransferase of Zea mays (Maize).